The primary structure comprises 562 residues: Arginine--tRNA ligase (562 aa).

The short motif at 121-131 is the 'HIGH' region element; sequence PNIAKPISMGH.

This sequence belongs to the class-I aminoacyl-tRNA synthetase family. Monomer.

The protein localises to the cytoplasm. It catalyses the reaction tRNA(Arg) + L-arginine + ATP = L-arginyl-tRNA(Arg) + AMP + diphosphate. This chain is Arginine--tRNA ligase, found in Lactiplantibacillus plantarum (strain ATCC BAA-793 / NCIMB 8826 / WCFS1) (Lactobacillus plantarum).